The chain runs to 302 residues: Oxygen-dependent coproporphyrinogen-III oxidase (302 aa).

Position 90 (S90) interacts with substrate. 2 residues coordinate a divalent metal cation: H94 and H104. The Proton donor role is filled by H104. Substrate is bound at residue 106–108 (NVR). Residues H143 and H173 each contribute to the a divalent metal cation site. Positions 238–273 (YVEFNLIYDRGTIFGLQSNGRTESILLSMPPIVKWR) are important for dimerization.

The protein belongs to the aerobic coproporphyrinogen-III oxidase family. In terms of assembly, homodimer. It depends on a divalent metal cation as a cofactor.

The protein localises to the cytoplasm. The catalysed reaction is coproporphyrinogen III + O2 + 2 H(+) = protoporphyrinogen IX + 2 CO2 + 2 H2O. The protein operates within porphyrin-containing compound metabolism; protoporphyrin-IX biosynthesis; protoporphyrinogen-IX from coproporphyrinogen-III (O2 route): step 1/1. Its function is as follows. Involved in the heme biosynthesis. Catalyzes the aerobic oxidative decarboxylation of propionate groups of rings A and B of coproporphyrinogen-III to yield the vinyl groups in protoporphyrinogen-IX. This chain is Oxygen-dependent coproporphyrinogen-III oxidase, found in Methylobacillus flagellatus (strain ATCC 51484 / DSM 6875 / VKM B-1610 / KT).